Reading from the N-terminus, the 608-residue chain is UvrABC system protein C (608 aa).

Residues 15–93 (HQPGVYRMYN…IKQYLPKYNV (79 aa)) form the GIY-YIG domain. The UVR domain occupies 203 to 238 (RQVIQSLVEQMEGASQALNFEKAATIRDQIQSMRRV).

This sequence belongs to the UvrC family. As to quaternary structure, interacts with UvrB in an incision complex.

Its subcellular location is the cytoplasm. Functionally, the UvrABC repair system catalyzes the recognition and processing of DNA lesions. UvrC both incises the 5' and 3' sides of the lesion. The N-terminal half is responsible for the 3' incision and the C-terminal half is responsible for the 5' incision. This is UvrABC system protein C from Aliivibrio salmonicida (strain LFI1238) (Vibrio salmonicida (strain LFI1238)).